The following is a 193-amino-acid chain: 7-methyl-GTP pyrophosphatase (193 aa).

Asp-70 functions as the Proton acceptor in the catalytic mechanism.

The protein belongs to the Maf family. YceF subfamily. The cofactor is a divalent metal cation.

It is found in the cytoplasm. The catalysed reaction is N(7)-methyl-GTP + H2O = N(7)-methyl-GMP + diphosphate + H(+). Its function is as follows. Nucleoside triphosphate pyrophosphatase that hydrolyzes 7-methyl-GTP (m(7)GTP). May have a dual role in cell division arrest and in preventing the incorporation of modified nucleotides into cellular nucleic acids. This is 7-methyl-GTP pyrophosphatase from Vibrio parahaemolyticus serotype O3:K6 (strain RIMD 2210633).